The following is a 65-amino-acid chain: Large ribosomal subunit protein bL35 (65 aa).

The protein belongs to the bacterial ribosomal protein bL35 family.

In Buchnera aphidicola subsp. Cinara cedri (strain Cc), this protein is Large ribosomal subunit protein bL35.